The following is a 124-amino-acid chain: Small ribosomal subunit protein eS6 (124 aa).

The protein belongs to the eukaryotic ribosomal protein eS6 family.

The protein is Small ribosomal subunit protein eS6 of Thermoplasma acidophilum (strain ATCC 25905 / DSM 1728 / JCM 9062 / NBRC 15155 / AMRC-C165).